Reading from the N-terminus, the 35-residue chain is Photosystem II reaction center protein M (35 aa).

Residues 5-25 (ILAFIATALFIIIPTAFLLIL) form a helical membrane-spanning segment.

The protein belongs to the PsbM family. PSII is composed of 1 copy each of membrane proteins PsbA, PsbB, PsbC, PsbD, PsbE, PsbF, PsbH, PsbI, PsbJ, PsbK, PsbL, PsbM, PsbT, PsbX, PsbY, PsbZ, Psb30/Ycf12, at least 3 peripheral proteins of the oxygen-evolving complex and a large number of cofactors. It forms dimeric complexes.

Its subcellular location is the plastid. It is found in the chloroplast thylakoid membrane. In terms of biological role, one of the components of the core complex of photosystem II (PSII). PSII is a light-driven water:plastoquinone oxidoreductase that uses light energy to abstract electrons from H(2)O, generating O(2) and a proton gradient subsequently used for ATP formation. It consists of a core antenna complex that captures photons, and an electron transfer chain that converts photonic excitation into a charge separation. This subunit is found at the monomer-monomer interface. The polypeptide is Photosystem II reaction center protein M (Chara vulgaris (Common stonewort)).